A 466-amino-acid polypeptide reads, in one-letter code: Cysteine--tRNA ligase (466 aa).

Cys-28 lines the Zn(2+) pocket. Residues 30-40 (PTVYNYIHIGN) carry the 'HIGH' region motif. Zn(2+) contacts are provided by Cys-208, His-233, and Glu-237. The 'KMSKS' region signature appears at 265-269 (KMSKS). Lys-268 is an ATP binding site.

This sequence belongs to the class-I aminoacyl-tRNA synthetase family. As to quaternary structure, monomer. Zn(2+) serves as cofactor.

It localises to the cytoplasm. The catalysed reaction is tRNA(Cys) + L-cysteine + ATP = L-cysteinyl-tRNA(Cys) + AMP + diphosphate. This chain is Cysteine--tRNA ligase, found in Staphylococcus aureus (strain Mu3 / ATCC 700698).